A 197-amino-acid chain; its full sequence is A-kinase anchor protein 14 (197 aa).

Polar residues-rich tracts occupy residues 1 to 11 and 19 to 29; these read MSETQNSTSQK and AASQTMPNTQD. The disordered stretch occupies residues 1–29; it reads MSETQNSTSQKAMDEDNKAASQTMPNTQD. Positions 35–52 are RII-binding; sequence ELTQVALALVEDVINYAV.

Binds to type II regulatory subunits (RII). As to expression, present in cilia (at protein level). Expressed in tissues containing axoneme-based organelles (cilia and/or flagella): trachea and testis. Highly expressed in airway cilia.

Its subcellular location is the cytoplasm. Functionally, binds to type II regulatory subunits of protein kinase A and anchors/targets them. In Homo sapiens (Human), this protein is A-kinase anchor protein 14 (AKAP14).